We begin with the raw amino-acid sequence, 862 residues long: DNA mismatch repair protein MutS (862 aa).

618–625 (GPNMGGKS) contacts ATP. Residues 799–824 (QLESRDNQASPAVASAPQQQSLSLSP) form a disordered region. The segment covering 806-824 (QASPAVASAPQQQSLSLSP) has biased composition (low complexity).

This sequence belongs to the DNA mismatch repair MutS family.

This protein is involved in the repair of mismatches in DNA. It is possible that it carries out the mismatch recognition step. This protein has a weak ATPase activity. The protein is DNA mismatch repair protein MutS of Shewanella denitrificans (strain OS217 / ATCC BAA-1090 / DSM 15013).